Reading from the N-terminus, the 197-residue chain is Segregation and condensation protein B (197 aa).

This sequence belongs to the ScpB family. Homodimer. Homodimerization may be required to stabilize the binding of ScpA to the Smc head domains. Component of a cohesin-like complex composed of ScpA, ScpB and the Smc homodimer, in which ScpA and ScpB bind to the head domain of Smc. The presence of the three proteins is required for the association of the complex with DNA.

The protein localises to the cytoplasm. Functionally, participates in chromosomal partition during cell division. May act via the formation of a condensin-like complex containing Smc and ScpA that pull DNA away from mid-cell into both cell halves. The protein is Segregation and condensation protein B of Syntrophotalea carbinolica (strain DSM 2380 / NBRC 103641 / GraBd1) (Pelobacter carbinolicus).